The chain runs to 800 residues: DNA topoisomerase 4 subunit A (800 aa).

Residues 31 to 496 enclose the Topo IIA-type catalytic domain; sequence LPDVRDGLKP…ISEIKIDKEV (466 aa). Y119 serves as the catalytic O-(5'-phospho-DNA)-tyrosine intermediate.

The protein belongs to the type II topoisomerase GyrA/ParC subunit family. ParC type 2 subfamily. In terms of assembly, heterotetramer composed of ParC and ParE.

The protein resides in the cell membrane. The enzyme catalyses ATP-dependent breakage, passage and rejoining of double-stranded DNA.. Its function is as follows. Topoisomerase IV is essential for chromosome segregation. It relaxes supercoiled DNA. Performs the decatenation events required during the replication of a circular DNA molecule. The protein is DNA topoisomerase 4 subunit A of Staphylococcus epidermidis (strain ATCC 12228 / FDA PCI 1200).